The primary structure comprises 470 residues: Uronate isomerase (470 aa).

This sequence belongs to the metallo-dependent hydrolases superfamily. Uronate isomerase family.

It catalyses the reaction D-glucuronate = D-fructuronate. It carries out the reaction aldehydo-D-galacturonate = keto-D-tagaturonate. It functions in the pathway carbohydrate metabolism; pentose and glucuronate interconversion. This is Uronate isomerase from Salmonella typhi.